The sequence spans 299 residues: Probable lipid kinase YegS (299 aa).

Residues 2-133 (AEFPASLLIL…IDMAQVNKQT (132 aa)) enclose the DAGKc domain. Residues Thr40, 66–72 (GDGTINE), and Thr95 each bind ATP. 3 residues coordinate Mg(2+): Leu215, Asp218, and Leu220. The Proton acceptor role is filled by Glu271.

Belongs to the diacylglycerol/lipid kinase family. YegS lipid kinase subfamily. It depends on Mg(2+) as a cofactor. The cofactor is Ca(2+).

Its subcellular location is the cytoplasm. In terms of biological role, probably phosphorylates lipids; the in vivo substrate is unknown. The protein is Probable lipid kinase YegS of Shigella dysenteriae serotype 1 (strain Sd197).